The sequence spans 317 residues: Transaldolase (317 aa).

Lysine 126 acts as the Schiff-base intermediate with substrate in catalysis.

The protein belongs to the transaldolase family. Type 1 subfamily. In terms of assembly, homodimer.

It is found in the cytoplasm. It catalyses the reaction D-sedoheptulose 7-phosphate + D-glyceraldehyde 3-phosphate = D-erythrose 4-phosphate + beta-D-fructose 6-phosphate. It participates in carbohydrate degradation; pentose phosphate pathway; D-glyceraldehyde 3-phosphate and beta-D-fructose 6-phosphate from D-ribose 5-phosphate and D-xylulose 5-phosphate (non-oxidative stage): step 2/3. Its function is as follows. Transaldolase is important for the balance of metabolites in the pentose-phosphate pathway. This Burkholderia vietnamiensis (strain G4 / LMG 22486) (Burkholderia cepacia (strain R1808)) protein is Transaldolase.